The sequence spans 351 residues: Secreted frizzled-related sequence protein 4 (351 aa).

A signal peptide spans 1 to 18 (MLRSILVALCLWLRLALG). An FZ domain is found at 19-139 (VRGAPCEAVR…VYDRGVCISP (121 aa)). 5 cysteine pairs are disulfide-bonded: C24-C85, C32-C78, C69-C108, C97-C136, and C101-C125. N-linked (GlcNAc...) asparagine glycans are attached at residues N38 and N68. N-linked (GlcNAc...) asparagine glycosylation is found at N116, N194, and N240. One can recognise an NTR domain in the interval 178–306 (CKCKKVKPTL…TIQDKKQIAS (129 aa)). A compositionally biased stretch (basic and acidic residues) spans 293–303 (EQQRTIQDKKQ). The segment at 293-351 (EQQRTIQDKKQIASRTSRTSRSNPPKSKGRPPAPKPASPKKNIKARSAPKKSNLKKSAS) is disordered. Positions 306–318 (SRTSRTSRSNPPK) are enriched in low complexity. Residues 333-351 (KNIKARSAPKKSNLKKSAS) show a composition bias toward basic residues.

It belongs to the secreted frizzled-related protein (sFRP) family. As to expression, expressed in the ovary. Localized to granulosa cells of periovulatory follicles and corpora lutea. Weakly expressed in adult tissues including kidney, brain and lung.

The protein localises to the secreted. Soluble frizzled-related proteins (sFRPS) function as modulators of Wnt signaling through direct interaction with Wnts. They have a role in regulating cell growth and differentiation in specific cell types. SFRP4 plays a role in bone morphogenesis. May also act as a regulator of adult uterine morphology and function. May also increase apoptosis during ovulation possibly through modulation of FZ1/FZ4/WNT4 signaling. Has phosphaturic effects by specifically inhibiting sodium-dependent phosphate uptake. In Mus musculus (Mouse), this protein is Secreted frizzled-related sequence protein 4 (Sfrp4).